The sequence spans 718 residues: Heat shock 70 kDa protein 6, chloroplastic (718 aa).

The transit peptide at 1–92 (MASSAAQIHV…IDLGTTNSAV (92 aa)) directs the protein to the chloroplast. A disordered region spans residues 671–718 (QSLYNQPGAGGPGAGPSPGGEGASSGDSSSSKGGDGDDVIDADFTDSQ). A compositionally biased stretch (gly residues) spans 678-693 (GAGGPGAGPSPGGEGA). The segment covering 706–718 (GDDVIDADFTDSQ) has biased composition (acidic residues).

It belongs to the heat shock protein 70 (TC 1.A.33) family. DnaK subfamily. In terms of assembly, interacts with geminivirus movement protein (MP).

It is found in the plastid. The protein resides in the chloroplast stroma. In terms of biological role, acts redundantly with HSP70-7 in the thermotolerance of germinating seeds. Plays an important role in the protein precursor import into chloroplasts. Functionally, in cooperation with other chaperones, Hsp70s are key components that facilitate folding of de novo synthesized proteins, assist translocation of precursor proteins into organelles, and are responsible for degradation of damaged protein under stress conditions. The sequence is that of Heat shock 70 kDa protein 6, chloroplastic (HSP70-6) from Arabidopsis thaliana (Mouse-ear cress).